A 396-amino-acid polypeptide reads, in one-letter code: Purine ribonucleoside efflux pump NepI (396 aa).

Topologically, residues 1–21 (MSEFIAENRGADAITRPNWSA) are cytoplasmic. A helical membrane pass occupies residues 22–42 (VFSVAFCVACLIIVEFLPVSL). Residues 43–54 (LTPMAQDLGISE) are Periplasmic-facing. The chain crosses the membrane as a helical span at residues 55–75 (GVAGQSVTVTAFVAMFASLFI). Over 76 to 85 (TQTIQATDRR) the chain is Cytoplasmic. Residues 86–106 (YVVILFAVLLTLSCLLVSFAN) traverse the membrane as a helical segment. Position 107 (S107) is a topological domain, periplasmic. A helical membrane pass occupies residues 108-128 (FSLLLIGRACLGLALGGFWAM). Residues 129-147 (SASLTMRLVPPRTVPKALS) lie on the Cytoplasmic side of the membrane. The chain crosses the membrane as a helical span at residues 148–168 (VIFGAVSIALVIAAPLGSFLG). Residues 169-175 (ELIGWRN) lie on the Periplasmic side of the membrane. A helical transmembrane segment spans residues 176–196 (VFNAAAAMGVLCIFWIIKSLP). Topologically, residues 197–215 (SLPGEPSHQKQNTFRLLQR) are cytoplasmic. Residues 216–236 (PGVMAGMIAIFMSFAGQFAFF) traverse the membrane as a helical segment. Topologically, residues 237–255 (TYIRPVYMNLAGFGVDGLT) are periplasmic. Residues 256-276 (LVLLSFGIASFVGTSLSSFIL) form a helical membrane-spanning segment. Residues 277 to 281 (KRSVK) are Cytoplasmic-facing. Residues 282 to 302 (LALAGAPFVLALSALVLTLWG) traverse the membrane as a helical segment. Residues 303 to 305 (SDK) are Periplasmic-facing. The chain crosses the membrane as a helical span at residues 306 to 326 (IVATGVAIIWGLTFALIPVGW). Topologically, residues 327 to 343 (STWITRSLADQAEKAGS) are cytoplasmic. The chain crosses the membrane as a helical span at residues 344–364 (IQVAVIQLANTCGAAIGGYAL). Over 365 to 366 (DN) the chain is Periplasmic. Residues 367–387 (IGLTSPLMLSGTLMLLTALLV) traverse the membrane as a helical segment. Residues 388 to 396 (TAKVKMKKS) are Cytoplasmic-facing.

It belongs to the major facilitator superfamily. DHA1 family. NepI (TC 2.A.1.2.26) subfamily.

The protein localises to the cell inner membrane. It carries out the reaction inosine(in) + H(+)(out) = inosine(out) + H(+)(in). It catalyses the reaction guanosine(in) + H(+)(out) = guanosine(out) + H(+)(in). Functionally, involved in the efflux of purine ribonucleosides, such as inosine and guanosine. The sequence is that of Purine ribonucleoside efflux pump NepI from Escherichia coli O1:K1 / APEC.